The following is an 880-amino-acid chain: Alanine--tRNA ligase (880 aa).

Residues His-565, His-569, Cys-675, and His-679 each coordinate Zn(2+).

It belongs to the class-II aminoacyl-tRNA synthetase family. Zn(2+) is required as a cofactor.

It localises to the cytoplasm. The catalysed reaction is tRNA(Ala) + L-alanine + ATP = L-alanyl-tRNA(Ala) + AMP + diphosphate. Catalyzes the attachment of alanine to tRNA(Ala) in a two-step reaction: alanine is first activated by ATP to form Ala-AMP and then transferred to the acceptor end of tRNA(Ala). Also edits incorrectly charged Ser-tRNA(Ala) and Gly-tRNA(Ala) via its editing domain. This is Alanine--tRNA ligase from Granulibacter bethesdensis (strain ATCC BAA-1260 / CGDNIH1).